Consider the following 239-residue polypeptide: Pyridoxine 5'-phosphate synthase (239 aa).

3-amino-2-oxopropyl phosphate is bound at residue Asn-7. Residue Asp-9 to His-10 coordinates 1-deoxy-D-xylulose 5-phosphate. Arg-18 lines the 3-amino-2-oxopropyl phosphate pocket. His-43 functions as the Proton acceptor in the catalytic mechanism. Arg-45 and His-50 together coordinate 1-deoxy-D-xylulose 5-phosphate. Glu-70 functions as the Proton acceptor in the catalytic mechanism. Thr-100 lines the 1-deoxy-D-xylulose 5-phosphate pocket. His-191 (proton donor) is an active-site residue. 3-amino-2-oxopropyl phosphate contacts are provided by residues Gly-192 and Gly-213–His-214.

The protein belongs to the PNP synthase family. In terms of assembly, homooctamer; tetramer of dimers.

The protein localises to the cytoplasm. The enzyme catalyses 3-amino-2-oxopropyl phosphate + 1-deoxy-D-xylulose 5-phosphate = pyridoxine 5'-phosphate + phosphate + 2 H2O + H(+). It functions in the pathway cofactor biosynthesis; pyridoxine 5'-phosphate biosynthesis; pyridoxine 5'-phosphate from D-erythrose 4-phosphate: step 5/5. Functionally, catalyzes the complicated ring closure reaction between the two acyclic compounds 1-deoxy-D-xylulose-5-phosphate (DXP) and 3-amino-2-oxopropyl phosphate (1-amino-acetone-3-phosphate or AAP) to form pyridoxine 5'-phosphate (PNP) and inorganic phosphate. This is Pyridoxine 5'-phosphate synthase from Geobacter sulfurreducens (strain ATCC 51573 / DSM 12127 / PCA).